A 556-amino-acid chain; its full sequence is Valencene synthase (556 aa).

The segment covering 1–12 (MSTQVSASSLAQ) has biased composition (polar residues). Residues 1-24 (MSTQVSASSLAQIPQPKNRPVANF) are disordered. Mg(2+) is bound by residues Asp310, Asp314, and Glu462. The DDXXD motif motif lies at 310–314 (DDIHD).

The protein belongs to the terpene synthase family. Tpsa subfamily. Mg(2+) is required as a cofactor. As to expression, expressed in flowers and anthers. Detected inside the pollen grains, but not in stems, leaves, tendrils, roots, seeds, pistils or caps.

The protein resides in the cytoplasm. The catalysed reaction is (2E,6E)-farnesyl diphosphate = (+)-valencene + diphosphate. It catalyses the reaction (2E,6E)-farnesyl diphosphate = (-)-7-epi-alpha-selinene + diphosphate. Its pathway is secondary metabolite biosynthesis; terpenoid biosynthesis. Involved in the biosynthesis of valencene, a major volatile emitted from flowers of grapevine. Can use farnesyl diphosphate as substrate, but not geranyl diphosphate or geranylgeranyl diphosphate. Produces mainly (+)-valencene and (-)-7-epi-alpha-selinene along with five minor products. The protein is Valencene synthase (ValCS) of Vitis vinifera (Grape).